A 223-amino-acid polypeptide reads, in one-letter code: Sigma non-opioid intracellular receptor 1 (223 aa).

At 1 to 9 the chain is on the lumenal side; the sequence is MPWAVGRRW. The interval 2-8 is targeting to endoplasmic reticulum-associated lipid droplets; that stretch reads PWAVGRR. A helical transmembrane segment spans residues 10 to 30; it reads AWITLFLTIVAVLIQAVWLWL. The Cytoplasmic segment spans residues 31–223; sequence GTQSFVFQRE…LTTYLFGQDP (193 aa). The segment at 99 to 106 is important for ligand-binding; sequence SLSEYVLL. The interval 177–223 is C-terminal hydrophobic region; that stretch reads VIPSTLAFALSDTIFSTQDFLTLFYTLRAYARGLRLELTTYLFGQDP.

The protein belongs to the ERG2 family. In terms of assembly, homotrimer. Interacts with KCNA2; cocaine consumption leads to increased interaction. Forms a ternary complex with ANK2 and ITPR3. The complex is disrupted by agonists. Interacts with KCNA4. Interacts with RNF112 in an oxidative stress-regulated manner. As to expression, expressed in ependymocytes and neurons throughout the CNS from the olfactory bulb to the spinal cord. Expressed by progenitor, mature and satellite oligodendrocytes and by Schwann cells (at protein level). Expressed in liver, intestine, kidney, brain, lung and heart. Expressed by retinal cells.

It is found in the nucleus inner membrane. The protein resides in the nucleus outer membrane. It localises to the nucleus envelope. The protein localises to the cytoplasmic vesicle. Its subcellular location is the endoplasmic reticulum membrane. It is found in the membrane. The protein resides in the lipid droplet. It localises to the cell junction. The protein localises to the cell membrane. Its subcellular location is the cell projection. It is found in the growth cone. The protein resides in the postsynaptic density membrane. In terms of biological role, functions in lipid transport from the endoplasmic reticulum and is involved in a wide array of cellular functions probably through regulation of the biogenesis of lipid microdomains at the plasma membrane. Involved in the regulation of different receptors it plays a role in BDNF signaling and EGF signaling. Also regulates ion channels like the potassium channel and could modulate neurotransmitter release. Plays a role in calcium signaling through modulation together with ANK2 of the ITP3R-dependent calcium efflux at the endoplasmic reticulum. Plays a role in several other cell functions including proliferation, survival and death. Originally identified for its ability to bind various psychoactive drugs it is involved in learning processes, memory and mood alteration. Necessary for proper mitochondrial axonal transport in motor neurons, in particular the retrograde movement of mitochondria. Plays a role in protecting cells against oxidative stress-induced cell death via its interaction with RNF112. The polypeptide is Sigma non-opioid intracellular receptor 1 (Sigmar1) (Rattus norvegicus (Rat)).